The primary structure comprises 374 residues: Pectate lyase 3 (374 aa).

The signal sequence occupies residues 1–22; the sequence is MKYLLPSAAAGLLLLAAQPTMA. Cysteine 93 and cysteine 176 are joined by a disulfide. Ca(2+) contacts are provided by aspartate 150, aspartate 152, glutamate 187, and aspartate 191. Residue arginine 239 is part of the active site. The cysteines at positions 350 and 373 are disulfide-linked.

Belongs to the polysaccharide lyase 1 family. PLADES subfamily. The cofactor is Ca(2+).

The protein localises to the secreted. The enzyme catalyses Eliminative cleavage of (1-&gt;4)-alpha-D-galacturonan to give oligosaccharides with 4-deoxy-alpha-D-galact-4-enuronosyl groups at their non-reducing ends.. The protein operates within glycan metabolism; pectin degradation; 2-dehydro-3-deoxy-D-gluconate from pectin: step 2/5. Its function is as follows. Involved in maceration and soft-rotting of plant tissue. The sequence is that of Pectate lyase 3 (pel3) from Pectobacterium carotovorum subsp. carotovorum (Erwinia carotovora subsp. carotovora).